A 103-amino-acid polypeptide reads, in one-letter code: Co-chaperonin GroES (103 aa).

Belongs to the GroES chaperonin family. As to quaternary structure, heptamer of 7 subunits arranged in a ring. Interacts with the chaperonin GroEL.

It is found in the cytoplasm. In terms of biological role, together with the chaperonin GroEL, plays an essential role in assisting protein folding. The GroEL-GroES system forms a nano-cage that allows encapsulation of the non-native substrate proteins and provides a physical environment optimized to promote and accelerate protein folding. GroES binds to the apical surface of the GroEL ring, thereby capping the opening of the GroEL channel. This chain is Co-chaperonin GroES, found in Prochlorococcus marinus (strain MIT 9211).